The sequence spans 825 residues: AP-3 complex subunit delta (825 aa).

10 HEAT repeats span residues 131–168 (GLAR…QYPE), 169–205 (AISA…RAPK), 207–243 (YLEF…YEPR), 244–281 (LVKK…LVGH), 285–323 (DKLA…THPS), 324–360 (LVSA…KENI), 363–400 (IVKT…KSTY), 469–513 (EKRT…LAHR), 515–547 (LLQA…LWVE), and 548–584 (KIVS…IVNT). Positions 787-825 (STNQGSMGDIVLETKSPIRVEKKKSKKKKKKKEKTSGKE) are disordered. Basic residues predominate over residues 807-819 (EKKKSKKKKKKKE).

It belongs to the adaptor complexes large subunit family. As to quaternary structure, adaptor protein complex 3 (AP-3) is a heterotetramer composed of 2 large adaptins (apl5 and apl6), a medium adaptin (apm3) and a small adaptin (aps3).

It is found in the golgi apparatus. The protein localises to the cytoplasmic vesicle. It localises to the clathrin-coated vesicle membrane. Functionally, part of the AP-3 complex, an adaptor-related complex which is not clathrin-associated. The complex is associated with the Golgi region as well as more peripheral structures. It facilitates the budding of vesicles from the Golgi membrane and may be directly involved in trafficking to the vacuole. This chain is AP-3 complex subunit delta (apl5), found in Schizosaccharomyces pombe (strain 972 / ATCC 24843) (Fission yeast).